The following is a 279-amino-acid chain: uncharacterized protein (279 aa).

Belongs to the peptidase C59 family.

This is an uncharacterized protein from Chlorella (PBCV-1).